A 515-amino-acid chain; its full sequence is Cytidine and dCMP deaminase domain-containing protein 1 (515 aa).

2 stretches are compositionally biased toward polar residues: residues 1–11 (MKEAGQMQNLE) and 18–27 (SVSTQTGSMT). Disordered regions lie at residues 1 to 27 (MKEA…GSMT) and 56 to 83 (RQKS…STDK). Basic and acidic residues predominate over residues 60–83 (QKNEEGKHGPLGDNEEMTRVSTDK). One can recognise a CMP/dCMP-type deaminase 1 domain in the interval 71–169 (GDNEEMTRVS…SLLTEASSSE (99 aa)). Zn(2+) contacts are provided by H110, C135, and C138. The short motif at 272 to 284 (NLRQNMKDLILLL) is the Nuclear export signal element. Positions 318-483 (EIARHCMVQA…LNPSGAYGLE (166 aa)) constitute a CMP/dCMP-type deaminase 2 domain. H399 is a Zn(2+) binding site. E401 acts as the Proton donor in catalysis. Residues C427 and C430 each coordinate Zn(2+). Positions 489-511 (RRENGVLRPVPQKEEQHQDKKLC) match the Bipartite nuclear localization signal motif. Residues 494–515 (VLRPVPQKEEQHQDKKLCLGIH) form a disordered region.

It belongs to the cytidine and deoxycytidylate deaminase family. It depends on Zn(2+) as a cofactor.

The protein localises to the cytoplasm. Its subcellular location is the nucleus. The catalysed reaction is 2'-deoxycytidine + H2O + H(+) = 2'-deoxyuridine + NH4(+). It carries out the reaction cytidine + H2O + H(+) = uridine + NH4(+). Catalyzes the deamination of cytidine and deoxycytidine into uridine and deoxyuridine, respectively. May play an important role in testicular development and spermatogenesis. In Pongo abelii (Sumatran orangutan), this protein is Cytidine and dCMP deaminase domain-containing protein 1 (CDADC1).